A 110-amino-acid polypeptide reads, in one-letter code: UPF0235 protein Mpop_2087 (110 aa).

It belongs to the UPF0235 family.

This Methylorubrum populi (strain ATCC BAA-705 / NCIMB 13946 / BJ001) (Methylobacterium populi) protein is UPF0235 protein Mpop_2087.